An 855-amino-acid chain; its full sequence is Sucrose synthase 5 (855 aa).

Positions 279–758 are GT-B glycosyltransferase; the sequence is SIFNIVIFSI…GLQRICECYT (480 aa).

Belongs to the glycosyltransferase 1 family. Plant sucrose synthase subfamily. Predominantly expressed in roots, flowers and immature seeds.

The protein localises to the cytoplasm. It localises to the membrane. It catalyses the reaction an NDP-alpha-D-glucose + D-fructose = a ribonucleoside 5'-diphosphate + sucrose + H(+). Its function is as follows. Sucrose-cleaving enzyme that provides UDP-glucose and fructose for various metabolic pathways. The sequence is that of Sucrose synthase 5 (SUS5) from Oryza sativa subsp. japonica (Rice).